A 338-amino-acid polypeptide reads, in one-letter code: D-erythrose-4-phosphate dehydrogenase (338 aa).

Residue 11–12 (RI) participates in NAD(+) binding. Residues 153–155 (SCT), R199, 212–213 (TK), and R235 each bind substrate. Catalysis depends on C154, which acts as the Nucleophile. N317 is an NAD(+) binding site.

It belongs to the glyceraldehyde-3-phosphate dehydrogenase family. Epd subfamily. In terms of assembly, homotetramer.

The protein localises to the cytoplasm. It carries out the reaction D-erythrose 4-phosphate + NAD(+) + H2O = 4-phospho-D-erythronate + NADH + 2 H(+). The protein operates within cofactor biosynthesis; pyridoxine 5'-phosphate biosynthesis; pyridoxine 5'-phosphate from D-erythrose 4-phosphate: step 1/5. Its function is as follows. Catalyzes the NAD-dependent conversion of D-erythrose 4-phosphate to 4-phosphoerythronate. The protein is D-erythrose-4-phosphate dehydrogenase of Shewanella baltica (strain OS223).